The following is a 196-amino-acid chain: NAD(P)H-quinone oxidoreductase subunit I (196 aa).

4Fe-4S ferredoxin-type domains lie at 54–83 (GRIH…VDWV) and 94–123 (KHYS…VTEE). 8 residues coordinate [4Fe-4S] cluster: Cys63, Cys66, Cys69, Cys73, Cys103, Cys106, Cys109, and Cys113. The disordered stretch occupies residues 174–196 (PAGAQRAGERPEAIANTAKSSEN).

The protein belongs to the complex I 23 kDa subunit family. NDH-1 is composed of at least 11 different subunits. The cofactor is [4Fe-4S] cluster.

The protein localises to the cellular thylakoid membrane. It carries out the reaction a plastoquinone + NADH + (n+1) H(+)(in) = a plastoquinol + NAD(+) + n H(+)(out). The catalysed reaction is a plastoquinone + NADPH + (n+1) H(+)(in) = a plastoquinol + NADP(+) + n H(+)(out). In terms of biological role, NDH-1 shuttles electrons from an unknown electron donor, via FMN and iron-sulfur (Fe-S) centers, to quinones in the respiratory and/or the photosynthetic chain. The immediate electron acceptor for the enzyme in this species is believed to be plastoquinone. Couples the redox reaction to proton translocation, and thus conserves the redox energy in a proton gradient. This Thermosynechococcus vestitus (strain NIES-2133 / IAM M-273 / BP-1) protein is NAD(P)H-quinone oxidoreductase subunit I.